Here is a 257-residue protein sequence, read N- to C-terminus: ECF RNA polymerase sigma factor SigE (257 aa).

The sigma-70 factor domain-2 stretch occupies residues Met87–Met153. Positions Asn111–Asp114 match the Polymerase core binding motif. Positions Ser186–His236 are sigma-70 factor domain-4. The segment at residues Asp211–Thr230 is a DNA-binding region (H-T-H motif).

Belongs to the sigma-70 factor family. ECF subfamily. Interacts transiently with the RNA polymerase catalytic core formed by RpoA, RpoB, RpoC and RpoZ (2 alpha, 1 beta, 1 beta' and 1 omega subunit) to form the RNA polymerase holoenzyme that can initiate transcription. Interacts (via sigma-70 factor domain 4) with RseA; interaction is abrogated by treatment of cells with H(2)O(2) or detergent.

Its function is as follows. Sigma factors are initiation factors that promote the attachment of RNA polymerase to specific initiation sites and are then released. Extracytoplasmic function (ECF) sigma factors are held in an inactive form by an anti-sigma factor until released. The protein is ECF RNA polymerase sigma factor SigE (sigE) of Mycolicibacterium smegmatis (strain ATCC 700084 / mc(2)155) (Mycobacterium smegmatis).